The primary structure comprises 317 residues: tRNA pseudouridine synthase B (317 aa).

The active-site Nucleophile is the Asp-47.

The protein belongs to the pseudouridine synthase TruB family. Type 1 subfamily.

It carries out the reaction uridine(55) in tRNA = pseudouridine(55) in tRNA. Its function is as follows. Responsible for synthesis of pseudouridine from uracil-55 in the psi GC loop of transfer RNAs. This chain is tRNA pseudouridine synthase B, found in Shewanella sp. (strain ANA-3).